The following is a 460-amino-acid chain: tRNA-splicing endonuclease subunit Sen2 (460 aa).

Residues 143-215 (EKEETPQHEP…SPSSHNGHVA (73 aa)) form a disordered region. A compositionally biased stretch (basic and acidic residues) spans 159 to 170 (SSLEGRVEKDEL). Active-site residues include Y364 and H372. A phosphoserine mark is found at S403, S406, and S410. K411 is a catalytic residue.

Belongs to the tRNA-intron endonuclease family. TRNA splicing endonuclease is a heterotetramer composed of TSEN2, TSEN15, TSEN34/LENG5 and TSEN54. tRNA splicing endonuclease complex also contains proteins of the pre-mRNA 3'-end processing machinery such as CLP1, CPSF1, CPSF4 and CSTF2.

It is found in the nucleus. It localises to the nucleolus. The enzyme catalyses pretRNA = a 3'-half-tRNA molecule with a 5'-OH end + a 5'-half-tRNA molecule with a 2',3'-cyclic phosphate end + an intron with a 2',3'-cyclic phosphate and a 5'-hydroxyl terminus.. Functionally, constitutes one of the two catalytic subunit of the tRNA-splicing endonuclease complex, a complex responsible for identification and cleavage of the splice sites in pre-tRNA. It cleaves pre-tRNA at the 5'- and 3'-splice sites to release the intron. The products are an intron and two tRNA half-molecules bearing 2',3'-cyclic phosphate and 5'-OH termini. There are no conserved sequences at the splice sites, but the intron is invariably located at the same site in the gene, placing the splice sites an invariant distance from the constant structural features of the tRNA body. Probably carries the active site for 5'-splice site cleavage. The tRNA splicing endonuclease is also involved in mRNA processing via its association with pre-mRNA 3'-end processing factors, establishing a link between pre-tRNA splicing and pre-mRNA 3'-end formation, suggesting that the endonuclease subunits function in multiple RNA-processing events. In Mus musculus (Mouse), this protein is tRNA-splicing endonuclease subunit Sen2 (Tsen2).